Here is a 462-residue protein sequence, read N- to C-terminus: MSDFKFTNTETELVVSLFVSKEQVDKEYQKLETEALKKIKVNGYRAGKAPKEALRARLNSKDLLDRVLQNLSKENLNEVYKQLMERKEPVTFAYTIDLKEKENGFTFDYKFAKVPTVSDLDVKSAKTELKLEKVTDKDVLESIETRLNEGRSRVKVEDEAKKGDEVLFDFKGYIDGEAFEGGEAEDYSLVLGSAQFIAGFEEQLLGKKAGWKGEIKATFPSTYYVKNYRDKEATFEINLKEVRRVNSLKLDSKEFKDSPLGSEEYLGQYKVFVKKDLVVSRFIQSQRDFLDELVKELSQSVKFHISDLLLKEKIAQLDKQFNDQLKQYKVKRKEYLEVIKATEEDIQVELKTSAVNEYKLSYIYQELLKEFKKEFTEEEKKQYQEVFDALKFTSPSNDLLDQLAVLEGLLEKTSRTKELKAWNDYKVYLVEELKKLDKEIQSMQEKQTQEPAEEKVETKEEK.

The PPIase FKBP-type domain occupies 163–248; the sequence is GDEVLFDFKG…LKEVRRVNSL (86 aa). A disordered region spans residues 442-462; it reads SMQEKQTQEPAEEKVETKEEK. A compositionally biased stretch (basic and acidic residues) spans 452-462; it reads AEEKVETKEEK.

Belongs to the FKBP-type PPIase family. Tig subfamily.

It localises to the cytoplasm. It carries out the reaction [protein]-peptidylproline (omega=180) = [protein]-peptidylproline (omega=0). Functionally, involved in protein export. Acts as a chaperone by maintaining the newly synthesized protein in an open conformation. Functions as a peptidyl-prolyl cis-trans isomerase. The protein is Trigger factor of Mycoplasmopsis synoviae (strain 53) (Mycoplasma synoviae).